The following is a 607-amino-acid chain: Serine/threonine-protein kinase sid2 (607 aa).

Residues Ser56, Ser60, Ser65, and Ser86 each carry the phosphoserine modification. Positions 93–108 are enriched in basic and acidic residues; the sequence is DRSGELSYKDNNHWSD. The tract at residues 93-118 is disordered; sequence DRSGELSYKDNNHWSDRSSTGSPRWE. A compositionally biased stretch (polar residues) spans 109-118; sequence RSSTGSPRWE. One can recognise a Protein kinase domain in the interval 208-508; the sequence is FQTITQVGQG…LKQVMQHPYF (301 aa). Residues 214–222 and Lys237 each bind ATP; that span reads VGQGGYGSV. Tyr219 bears the Phosphotyrosine mark. The Proton acceptor role is filled by Asp331. At Ser402 the chain carries Phosphoserine. The 81-residue stretch at 509–589 folds into the AGC-kinase C-terminal domain; sequence SKIDWKNVRT…RHQKNSHPTS (81 aa). Residues 586 to 607 are disordered; sequence HPTSSSSALSSPLSAPSFGTLL. Low complexity predominate over residues 589–607; sequence SSSSALSSPLSAPSFGTLL.

Belongs to the protein kinase superfamily. Ser/Thr protein kinase family. As to quaternary structure, interacts with mob1 and cdc11.

It is found in the cytoplasm. It localises to the cytoskeleton. The protein resides in the microtubule organizing center. The protein localises to the spindle pole body. The catalysed reaction is L-seryl-[protein] + ATP = O-phospho-L-seryl-[protein] + ADP + H(+). It carries out the reaction L-threonyl-[protein] + ATP = O-phospho-L-threonyl-[protein] + ADP + H(+). Its function is as follows. Part of a signaling pathway. Required for initiation of medial ring constriction and septation. In Schizosaccharomyces pombe (strain 972 / ATCC 24843) (Fission yeast), this protein is Serine/threonine-protein kinase sid2 (sid2).